The sequence spans 421 residues: Lipid II:glycine glycyltransferase (421 aa).

The protein belongs to the FemABX family. As to quaternary structure, monomer.

It is found in the cytoplasm. It catalyses the reaction beta-D-GlcNAc-(1-&gt;4)-Mur2Ac(oyl-L-Ala-D-isoglutaminyl-L-Lys-D-Ala-D-Ala)-di-trans,octa-cis-undecaprenyl diphosphate + glycyl-tRNA(Gly) = beta-D-GlcNAc-(1-&gt;4)-Mur2Ac(oyl-L-Ala-D-isoglutaminyl-L-Lys-(N(6)-Gly)-D-Ala-D-Ala)-di-trans,octa-cis-undecaprenyl diphosphate + tRNA(Gly) + H(+). Functionally, catalyzes the incorporation of the first glycine of the pentaglycine interpeptide bridge, which is characteristic of the S.aureus peptidoglycan. This glycine is added to the epsilon-amino group of the L-lysine of the membrane-bound lipid II intermediate (GlcNAc-(beta-1,4)-N-acetylmuramic acid(-L-Ala-D-iGln-L-Lys-D-Ala-D-Ala)-pyrophosphoryl-undecaprenol), using glycyl-tRNA(Gly) as donor, in a ribosome-independent mechanism. Involved in methicillin resistance. The sequence is that of Lipid II:glycine glycyltransferase (femX) from Staphylococcus aureus (strain Mu50 / ATCC 700699).